An 805-amino-acid polypeptide reads, in one-letter code: Cation channel sperm-associated auxiliary subunit delta (805 aa).

The signal sequence occupies residues 1–16 (MLVLMLAAAVATMVRA). The Extracellular portion of the chain corresponds to 17 to 723 (HTLCRVHTVR…ALPVTKFQPL (707 aa)). 7 disulfide bridges follow: Cys-20–Cys-366, Cys-56–Cys-143, Cys-142–Cys-149, Cys-384–Cys-493, Cys-507–Cys-701, Cys-522–Cys-569, and Cys-621–Cys-651. Residues Asn-227, Asn-419, Asn-469, Asn-535, and Asn-627 are each glycosylated (N-linked (GlcNAc...) asparagine). A helical membrane pass occupies residues 724 to 745 (LTILLMVTTTLLTAWLAYAIPK). Topologically, residues 746–805 (QLRSEKGQRLLGFCYQILQLCLGVCFCTWLRGKLRQWLRPRRVKDQNRGKVRVAQKHPET) are cytoplasmic.

It belongs to the CATSPERD family. Component of the CatSper complex or CatSpermasome composed of the core pore-forming members CATSPER1, CATSPER2, CATSPER3 and CATSPER4 as well as auxiliary members CATSPERB, CATSPERG2, CATSPERD, CATSPERE, CATSPERZ, C2CD6/CATSPERT, SLCO6C1, TMEM249, TMEM262 and EFCAB9. HSPA1 may be an additional auxiliary complex member. The core complex members CATSPER1, CATSPER2, CATSPER3 and CATSPER4 form a heterotetrameric channel. The auxiliary CATSPERB, CATSPERG2, CATSPERD and CATSPERE subunits form a pavilion-like structure over the pore which stabilizes the complex through interactions with CATSPER4, CATSPER3, CATSPER1 and CATSPER2 respectively. SLCO6C1 interacts with CATSPERE and TMEM262/CATSPERH interacts with CATSPERB, further stabilizing the complex. C2CD6/CATSPERT interacts at least with CATSPERD and is required for targeting the CatSper complex in the flagellar membrane. Testis-specific.

It localises to the cell projection. The protein resides in the cilium. Its subcellular location is the flagellum membrane. Auxiliary component of the CatSper complex, a complex involved in sperm cell hyperactivation. Sperm cell hyperactivation is needed for sperm motility which is essential late in the preparation of sperm for fertilization. Required for CATSPER1 stability before intraflagellar transport and/or incorporation of the CatSper complex channel into the flagellar membrane. In Mus musculus (Mouse), this protein is Cation channel sperm-associated auxiliary subunit delta.